We begin with the raw amino-acid sequence, 302 residues long: GrpE protein homolog 1, mitochondrial (302 aa).

The transit peptide at 1–39 (MLVSRVLSRVSRSAGLRSSFSSVVTPKRNQIPIVASRFH) directs the protein to the mitochondrion. The segment at 77–97 (SAEPKGNESNTEVPKTGETSE) is disordered.

It belongs to the GrpE family. Probable component of the PAM complex, at least composed of SSC1 (mtHsp70), MGE1, TIM44, PAM16/TIM16, PAM17 and PAM18/TIM14. Interacts with SSQ1.

Its subcellular location is the mitochondrion matrix. Functionally, essential component of the PAM complex, a complex required for the translocation of transit peptide-containing proteins from the inner membrane into the mitochondrial matrix in an ATP-dependent manner. Seems to control the nucleotide-dependent binding of mitochondrial HSP70 to substrate proteins. Binds ATP. Interacts with copper ions Cu(2+). This Arabidopsis thaliana (Mouse-ear cress) protein is GrpE protein homolog 1, mitochondrial.